Consider the following 377-residue polypeptide: Putative glutamate--cysteine ligase 2 (377 aa).

The protein belongs to the glutamate--cysteine ligase type 2 family. YbdK subfamily.

The catalysed reaction is L-cysteine + L-glutamate + ATP = gamma-L-glutamyl-L-cysteine + ADP + phosphate + H(+). ATP-dependent carboxylate-amine ligase which exhibits weak glutamate--cysteine ligase activity. This is Putative glutamate--cysteine ligase 2 from Chromobacterium violaceum (strain ATCC 12472 / DSM 30191 / JCM 1249 / CCUG 213 / NBRC 12614 / NCIMB 9131 / NCTC 9757 / MK).